Reading from the N-terminus, the 105-residue chain is Large ribosomal subunit protein uL24 (105 aa).

It belongs to the universal ribosomal protein uL24 family. Part of the 50S ribosomal subunit.

In terms of biological role, one of two assembly initiator proteins, it binds directly to the 5'-end of the 23S rRNA, where it nucleates assembly of the 50S subunit. One of the proteins that surrounds the polypeptide exit tunnel on the outside of the subunit. The sequence is that of Large ribosomal subunit protein uL24 from Buchnera aphidicola subsp. Cinara cedri (strain Cc).